A 626-amino-acid chain; its full sequence is MDLFNYSRRETSEVNIGAVPLGGPNPIRIQSMTNTPTQDTEACVAQAKRIVDAGGEYVRLTTQGVKEAENLMNINIGLRSTGYMVPLVADVHFNPKVADVAAQYAEKVRINPGNYVDPGRTFKQLEYTDEEYAAELQKIRDRFVPFLNICKENHTAVRIGVNHGSLSDRIMSRYGDTPEGMVESCMEFLRICVDEKFTDVVISIKASNTVVMVKTVRLLVSVMEQEGMSFPLHLGVTEAGDGEDGRIKSALGIGALLADGLGDTIRVSLSEEPEAEIPVARKLVDYITSRRNHPYIPGMEAPDFNYLSPVRRKTRPVRNIGGDHLPVVLADRMDGRMETHPQFTPDYIYAGRALPEQTEPGVQYILDADVWKGEPDTWPAFNYAQLELMETCAAELKFLFTPYMALTREVVACLKQHPEAVVVSQSNHPNRVGEHRALAHQLTVEGLQNPVIFFQHYAEDTAEDLQIKAGADMGALIFDGLCDGIYLFNQGKLSHAVIDATAFGILQAGRIRTSKTEYISCPGCGRTLFNLQSTIARVKEATSHLKGLKIGIMGCIVNGPGEMADADYGYVGAGRGKISLYKQKECIEKNIPEEEAVEKLIELIKANGDYEEKTSSLSSPKEKEDK.

[4Fe-4S] cluster is bound by residues C521, C524, C555, and E562.

It belongs to the IspG family. The cofactor is [4Fe-4S] cluster.

The enzyme catalyses (2E)-4-hydroxy-3-methylbut-2-enyl diphosphate + oxidized [flavodoxin] + H2O + 2 H(+) = 2-C-methyl-D-erythritol 2,4-cyclic diphosphate + reduced [flavodoxin]. The protein operates within isoprenoid biosynthesis; isopentenyl diphosphate biosynthesis via DXP pathway; isopentenyl diphosphate from 1-deoxy-D-xylulose 5-phosphate: step 5/6. Functionally, converts 2C-methyl-D-erythritol 2,4-cyclodiphosphate (ME-2,4cPP) into 1-hydroxy-2-methyl-2-(E)-butenyl 4-diphosphate. This chain is 4-hydroxy-3-methylbut-2-en-1-yl diphosphate synthase (flavodoxin), found in Bacteroides fragilis (strain ATCC 25285 / DSM 2151 / CCUG 4856 / JCM 11019 / LMG 10263 / NCTC 9343 / Onslow / VPI 2553 / EN-2).